The primary structure comprises 526 residues: tRNA (guanine(26)-N(2))-dimethyltransferase (526 aa).

Residues 1–10 (MTENVNSSGD) are compositionally biased toward polar residues. A disordered region spans residues 1 to 20 (MTENVNSSGDSAIKSEDKEE). A Trm1 methyltransferase domain is found at 22 to 441 (TVIQEGQAKV…APMHLLWDIY (420 aa)). S-adenosyl-L-methionine contacts are provided by Arg47, Arg104, and Asp122. Residues Cys286, Cys289, Cys325, and Cys328 each contribute to the Zn(2+) site. Positions 498-526 (KGKNWGPRQKAKGSVNSTKAGFQLTEHKE) are disordered.

The protein belongs to the class I-like SAM-binding methyltransferase superfamily. Trm1 family.

The enzyme catalyses guanosine(26) in tRNA + 2 S-adenosyl-L-methionine = N(2)-dimethylguanosine(26) in tRNA + 2 S-adenosyl-L-homocysteine + 2 H(+). In terms of biological role, dimethylates a single guanine residue at position 26 of most tRNAs using S-adenosyl-L-methionine as donor of the methyl groups. This chain is tRNA (guanine(26)-N(2))-dimethyltransferase (trm-1), found in Caenorhabditis elegans.